The sequence spans 438 residues: GRAS family protein TF80 (438 aa).

Residues 13–436 (LRYDSHGSNP…RPLFSVSAWK (424 aa)) enclose the GRAS domain. Positions 20–81 (SNPMIPLIEC…YKIVKHLPGV (62 aa)) are leucine repeat I (LRI). Residues 100-165 (QKYFYDLCPF…GGPPFLKITG (66 aa)) form a VHIID region. The VHIID signature appears at 131-135 (VHIID). The tract at residues 175–207 (QMSFHLTTEAGILDFPLQFNPIISKLEDVDFEN) is leucine repeat II (LRII). A PFYRE region spans residues 216–359 (VAISSVLQLH…SMLLGEQIKN (144 aa)). The LXXLL motif motif lies at 224-228 (LHSLL). Positions 362–436 (TCEGVDRKER…RPLFSVSAWK (75 aa)) are SAW.

This sequence belongs to the GRAS family. Interacts with RAM1.

It is found in the nucleus. The protein is GRAS family protein TF80 (TF80) of Medicago truncatula (Barrel medic).